Reading from the N-terminus, the 264-residue chain is Ribosomal RNA small subunit methyltransferase A (264 aa).

The S-adenosyl-L-methionine site is built by Asn12, Leu14, Gly40, Glu61, Asp86, and Asn105.

The protein belongs to the class I-like SAM-binding methyltransferase superfamily. rRNA adenine N(6)-methyltransferase family. RsmA subfamily.

It localises to the cytoplasm. The enzyme catalyses adenosine(1518)/adenosine(1519) in 16S rRNA + 4 S-adenosyl-L-methionine = N(6)-dimethyladenosine(1518)/N(6)-dimethyladenosine(1519) in 16S rRNA + 4 S-adenosyl-L-homocysteine + 4 H(+). Specifically dimethylates two adjacent adenosines (A1518 and A1519) in the loop of a conserved hairpin near the 3'-end of 16S rRNA in the 30S particle. May play a critical role in biogenesis of 30S subunits. The polypeptide is Ribosomal RNA small subunit methyltransferase A (Fusobacterium nucleatum subsp. nucleatum (strain ATCC 25586 / DSM 15643 / BCRC 10681 / CIP 101130 / JCM 8532 / KCTC 2640 / LMG 13131 / VPI 4355)).